We begin with the raw amino-acid sequence, 311 residues long: MAAPRGPRALSAAAPGSGKPKLTHPGKAILAGGLAGGIEICITFPTEYVKTQLQLDERANPPRYRGIGDCVRQTVRSHGVLGLYRGLSSLLYGSIPKAAVRFGMFEFLSNHMRDAQGRLDSRRGLLCGLGAGVAEAVVVVCPMETIKVKFIHDQTSSNPKYRGFFHGVREIIREQGLKGTYQGLTATVLKQGSNQAIRFFVMTSLRNWYQGDNHNKPMNPLITGVFGATAGAASVFGNTPLDVIKTRMQGLEAHKYRNTLDCGLKILKNEGPKAFYKGTVPRLGRVCLDVAIVFIIYDEVVKLLNKVWKTD.

Positions 1–13 are cleaved as a propeptide — removed in mature form; sequence MAAPRGPRALSAA. The interval 1–21 is disordered; the sequence is MAAPRGPRALSAAAPGSGKPK. Solcar repeat units follow at residues 23 to 111, 122 to 208, and 218 to 303; these read THPG…LSNH, RRGL…LRNW, and MNPL…VVKL. 3 helical membrane-spanning segments follow: residues 29 to 46, 86 to 105, and 129 to 143; these read ILAG…TFPT, GLSS…FGMF, and LGAG…VCPM. Ser-156 carries the post-translational modification Phosphoserine. 3 helical membrane passes run 183–202, 224–241, and 278–297; these read GLTA…FFVM, GVFG…NTPL, and GTVP…FIIY.

It belongs to the mitochondrial carrier (TC 2.A.29) family. Possesses a short cleavable presequence, which, however, is found to be dispensable both for targeting to mitochondria and insertion into the inner membrane. However, the presequence is required to keep SLC25A1 in a soluble state and thus in an import-competent state. Mature SLC25A1 lacking the presequence is prone to aggregation. Expressed minimally but ubiquitously throughout the adult brain. Detected at higher levels in the olfactory bulb, neocortex and cerebellum. Also expressed in a subset of large cells in the globus pallidus.

The protein localises to the mitochondrion inner membrane. It localises to the mitochondrion membrane. It carries out the reaction (S)-malate(in) + citrate(out) = (S)-malate(out) + citrate(in). The catalysed reaction is D-threo-isocitrate(in) + citrate(out) = D-threo-isocitrate(out) + citrate(in). It catalyses the reaction citrate(out) + succinate(in) = citrate(in) + succinate(out). The enzyme catalyses cis-aconitate(in) + citrate(out) = cis-aconitate(out) + citrate(in). It carries out the reaction trans-aconitate(in) + citrate(out) = trans-aconitate(out) + citrate(in). The catalysed reaction is phosphoenolpyruvate(in) + citrate(out) = phosphoenolpyruvate(out) + citrate(in). It catalyses the reaction maleate(in) + citrate(out) = maleate(out) + citrate(in). Functionally, mitochondrial electroneutral antiporter that exports citrate from the mitochondria into the cytosol in exchange for malate. Also able to mediate the exchange of citrate for isocitrate, phosphoenolpyruvate, cis-aconitate and to a lesser extent trans-aconitate, maleate and succinate. In the cytoplasm, citrate plays important roles in fatty acid and sterol synthesis, regulation of glycolysis, protein acetylation, and other physiopathological processes. This Mus musculus (Mouse) protein is Tricarboxylate transport protein, mitochondrial.